We begin with the raw amino-acid sequence, 294 residues long: MNDALKTYLNGICWFLLSLVTSSINDVMSKYLGTRLHSFEVAFFRFFFSSIVLLPFVVYYGKNALKTSRPFVHVLRGLLLFFGMTSWTYGLTIAPVTTATVVSFAIPLFTLILAVFILNENIIWQRWVVTVVGFIGLVVMLKPHTKDFNPEILYLILAAISFAMLDIINKKFVVKESMLSMLFYSAIVTAMVSLPVAMQYWITPSSFELALLFVLGSSGSFILFFLLKAFSIVDATATAPYRYLELVISAIAAYFIFNEFPDKSTVHGAVIIIPATLFIIYSEKKSMSSKHESQ.

10 helical membrane passes run 4-24 (ALKTYLNGICWFLLSLVTSSI), 41-61 (VAFFRFFFSSIVLLPFVVYYG), 74-91 (VLRGLLLFFGMTSWTYGL), 98-118 (TATVVSFAIPLFTLILAVFIL), 121-141 (NIIWQRWVVTVVGFIGLVVML), 148-168 (FNPEILYLILAAISFAMLDII), 178-198 (MLSMLFYSAIVTAMVSLPVAM), 207-227 (FELALLFVLGSSGSFILFFLL), 237-257 (ATAPYRYLELVISAIAAYFIF), and 260-280 (FPDKSTVHGAVIIIPATLFII). 2 consecutive EamA domains span residues 22 to 141 (SSIN…VVML) and 160 to 280 (ISFA…LFII).

It belongs to the drug/metabolite transporter (DMT) superfamily. 10 TMS drug/metabolite exporter (DME) (TC 2.A.7.3) family.

The protein localises to the cell inner membrane. With respect to regulation, transport is inhibited by S-adenosylethionine and to a lesser extent by S-adenosylhomocysteine. Unlike eukaryotic transporters is not inhibited by sinfungin. Also inhibited by 2.4-dinitrophenol, suggesting transport is an energy-dependent process. In terms of biological role, transports S-adenosylmethionine. The sequence is that of S-adenosylmethionine uptake transporter (sam) from Rickettsia prowazekii (strain Madrid E).